Reading from the N-terminus, the 1046-residue chain is FERM, ARHGEF and pleckstrin domain-containing protein 1 (1046 aa).

One can recognise an FERM domain in the interval 40–320 (ISIKIQMLDD…EHHAFFRLFE (281 aa)). The interval 374–522 (LTAQPSEQHA…LISPLLNDPS (149 aa)) is disordered. A compositionally biased stretch (basic and acidic residues) spans 413–424 (KELKASTEDTGQ). The span at 458-513 (RMQQNRPQSQQPSTAGSLTGSPHLSELSINSQGGPSVANMSLSPNLSPDAKQSSPL) shows a compositional bias: polar residues. Residues 541-732 (KAYFIAKEVA…TEMMAQLHGN (192 aa)) enclose the DH domain. In terms of domain architecture, PH 1 spans 761–858 (EFIRLGSLSK…WIEDIQMAID (98 aa)). Residues 864–907 (SDPVPELLASSPPDNKSPDETTVDQESEDDLSASRTSLERQSPH) are disordered. Residues 884-894 (TTVDQESEDDL) show a composition bias toward acidic residues. Positions 933-1030 (ENQLSGNLLR…WMEVIRSATS (98 aa)) constitute a PH 2 domain.

In terms of assembly, interacts with PLXNA4. Detected in lateral motor column motor neurons and in preganglionic autonomic motor neurons of the column of Terni in the embryonic spinal cord (at protein level).

The protein resides in the cell membrane. Its subcellular location is the synapse. It localises to the synaptosome. The protein localises to the cytoplasm. It is found in the cytosol. The protein resides in the cell projection. Its subcellular location is the filopodium. It localises to the dendrite. The protein localises to the dendritic spine. Functions as a guanine nucleotide exchange factor for RAC1. Plays a role in semaphorin signaling via its interaction with PLXNA4. Plays a role in the assembly and disassembly of dendritic filopodia, the formation of dendritic spines, regulation of dendrite length and ultimately the formation of synapses. In Gallus gallus (Chicken), this protein is FERM, ARHGEF and pleckstrin domain-containing protein 1 (FARP1).